The chain runs to 167 residues: Lipoprotein signal peptidase (167 aa).

4 consecutive transmembrane segments (helical) span residues 5-25, 42-62, 70-90, and 102-122; these read ICST…LDLG, LIPY…SFLA, WFFA…MYRA, and ALII…GFVI. Catalysis depends on residues D123 and D141. A helical transmembrane segment spans residues 137–157; sequence FNIADMAICIGAGLVIIDSFL.

Belongs to the peptidase A8 family.

The protein localises to the cell inner membrane. The enzyme catalyses Release of signal peptides from bacterial membrane prolipoproteins. Hydrolyzes -Xaa-Yaa-Zaa-|-(S,diacylglyceryl)Cys-, in which Xaa is hydrophobic (preferably Leu), and Yaa (Ala or Ser) and Zaa (Gly or Ala) have small, neutral side chains.. It participates in protein modification; lipoprotein biosynthesis (signal peptide cleavage). In terms of biological role, this protein specifically catalyzes the removal of signal peptides from prolipoproteins. This is Lipoprotein signal peptidase from Photorhabdus laumondii subsp. laumondii (strain DSM 15139 / CIP 105565 / TT01) (Photorhabdus luminescens subsp. laumondii).